We begin with the raw amino-acid sequence, 50 residues long: Toxic protein HokC (50 aa).

Residues 1 to 5 (MKQHK) are Cytoplasmic-facing. The helical; Signal-anchor for type II membrane protein transmembrane segment at 6 to 24 (AMIVALIVICITAVVAALV) threads the bilayer. The Periplasmic segment spans residues 25–50 (TRKDLCEVHIRTGQTEVAVFTAYESE).

The protein belongs to the Hok/Gef family. As to quaternary structure, homodimer; disulfide-linked.

It localises to the cell inner membrane. Its function is as follows. Toxic component of a type I toxin-antitoxin (TA) system. When overexpressed kills cells within minutes; causes collapse of the transmembrane potential and arrest of respiration. Its toxic effect is probably neutralized by antisense antitoxin RNA SokC. In Escherichia coli (strain K12), this protein is Toxic protein HokC.